The following is a 255-amino-acid chain: Acetyl-coenzyme A carboxylase carboxyl transferase subunit alpha (255 aa).

The region spanning 1 to 235 (MNIAKIVREA…KKELQTELAR (235 aa)) is the CoA carboxyltransferase C-terminal domain.

This sequence belongs to the AccA family. As to quaternary structure, acetyl-CoA carboxylase is a heterohexamer composed of biotin carboxyl carrier protein (AccB), biotin carboxylase (AccC) and two subunits each of ACCase subunit alpha (AccA) and ACCase subunit beta (AccD).

It localises to the cytoplasm. The enzyme catalyses N(6)-carboxybiotinyl-L-lysyl-[protein] + acetyl-CoA = N(6)-biotinyl-L-lysyl-[protein] + malonyl-CoA. It functions in the pathway lipid metabolism; malonyl-CoA biosynthesis; malonyl-CoA from acetyl-CoA: step 1/1. In terms of biological role, component of the acetyl coenzyme A carboxylase (ACC) complex. First, biotin carboxylase catalyzes the carboxylation of biotin on its carrier protein (BCCP) and then the CO(2) group is transferred by the carboxyltransferase to acetyl-CoA to form malonyl-CoA. The sequence is that of Acetyl-coenzyme A carboxylase carboxyl transferase subunit alpha from Streptococcus pneumoniae (strain CGSP14).